The chain runs to 353 residues: UDP-N-acetylglucosamine--N-acetylmuramyl-(pentapeptide) pyrophosphoryl-undecaprenol N-acetylglucosamine transferase (353 aa).

UDP-N-acetyl-alpha-D-glucosamine is bound by residues threonine 10 to glycine 12, asparagine 124, serine 183, and glutamine 283.

Belongs to the glycosyltransferase 28 family. MurG subfamily.

Its subcellular location is the cell inner membrane. It catalyses the reaction di-trans,octa-cis-undecaprenyl diphospho-N-acetyl-alpha-D-muramoyl-L-alanyl-D-glutamyl-meso-2,6-diaminopimeloyl-D-alanyl-D-alanine + UDP-N-acetyl-alpha-D-glucosamine = di-trans,octa-cis-undecaprenyl diphospho-[N-acetyl-alpha-D-glucosaminyl-(1-&gt;4)]-N-acetyl-alpha-D-muramoyl-L-alanyl-D-glutamyl-meso-2,6-diaminopimeloyl-D-alanyl-D-alanine + UDP + H(+). It participates in cell wall biogenesis; peptidoglycan biosynthesis. Cell wall formation. Catalyzes the transfer of a GlcNAc subunit on undecaprenyl-pyrophosphoryl-MurNAc-pentapeptide (lipid intermediate I) to form undecaprenyl-pyrophosphoryl-MurNAc-(pentapeptide)GlcNAc (lipid intermediate II). The protein is UDP-N-acetylglucosamine--N-acetylmuramyl-(pentapeptide) pyrophosphoryl-undecaprenol N-acetylglucosamine transferase of Helicobacter pylori (strain ATCC 700392 / 26695) (Campylobacter pylori).